Reading from the N-terminus, the 113-residue chain is Hydrogenase maturation factor HypA (113 aa).

Position 2 (His2) interacts with Ni(2+). Zn(2+)-binding residues include Cys73, Cys76, Cys89, and Cys92.

It belongs to the HypA/HybF family.

In terms of biological role, involved in the maturation of [NiFe] hydrogenases. Required for nickel insertion into the metal center of the hydrogenase. The protein is Hydrogenase maturation factor HypA of Azotobacter vinelandii.